The following is a 264-amino-acid chain: Sororin (264 aa).

The segment at 1 to 45 (MAERRTRSGGAAQRSGPRTSLTKPSKSSKRKSGSDLPNSFSEIWP) is disordered. Phosphoserine is present on residues serine 20, serine 32, serine 34, serine 78, and serine 82. Residues 87–89 (KEN) carry the KEN box motif. A Phosphothreonine modification is found at threonine 97. The residue at position 106 (serine 106) is a Phosphoserine. Residues threonine 110, threonine 114, and threonine 159 each carry the phosphothreonine modification. Residues 166-168 (FGF) carry the FGF motif motif. Serine 222 carries the phosphoserine modification. Positions 242 to 264 (LDKWAVAMNAEFEAAEQFELLIE) are C-terminal Sororin domain.

This sequence belongs to the sororin family. Interacts with the APC/C complex. Interacts with the chromatin-bound cohesin complex; the interaction is indirect, occurs after DNA replication and requires acetylation of the cohesin component SMC3. Interacts (via the FGF motif) with PDS5A and PDS5B; the interaction is direct and prevents the interaction of PDS5A with WAPL. In terms of processing, phosphorylated. Phosphorylation, as cells enter mitosis, disrupts the interaction with PDS5A and relieves the inhibition of WAPL by CDCA5. Ubiquitinated by the APC/C complex in G1, leading to its degradation.

Its subcellular location is the nucleus. It localises to the chromosome. It is found in the cytoplasm. Its function is as follows. Regulator of sister chromatid cohesion in mitosis stabilizing cohesin complex association with chromatin. May antagonize the action of WAPL which stimulates cohesin dissociation from chromatin. Cohesion ensures that chromosome partitioning is accurate in both meiotic and mitotic cells and plays an important role in DNA repair. Required for efficient DNA double-stranded break repair. The protein is Sororin (Cdca5) of Mus musculus (Mouse).